Reading from the N-terminus, the 444-residue chain is 23S rRNA (uracil(1939)-C(5))-methyltransferase RlmD (444 aa).

The TRAM domain maps to 5–64 (KPKLNLTSQTARIVNLSHDGRGIARINGKATFIQGALPGEVVEFQYTRVKKDFDEGKLLS). [4Fe-4S] cluster-binding residues include cysteine 77, cysteine 83, cysteine 86, and cysteine 166. 6 residues coordinate S-adenosyl-L-methionine: glutamine 276, phenylalanine 305, asparagine 310, glutamate 326, asparagine 353, and aspartate 374. Cysteine 400 serves as the catalytic Nucleophile.

This sequence belongs to the class I-like SAM-binding methyltransferase superfamily. RNA M5U methyltransferase family. RlmD subfamily.

It carries out the reaction uridine(1939) in 23S rRNA + S-adenosyl-L-methionine = 5-methyluridine(1939) in 23S rRNA + S-adenosyl-L-homocysteine + H(+). Functionally, catalyzes the formation of 5-methyl-uridine at position 1939 (m5U1939) in 23S rRNA. The polypeptide is 23S rRNA (uracil(1939)-C(5))-methyltransferase RlmD (Legionella pneumophila (strain Lens)).